The chain runs to 763 residues: MKREHMDHDTEDVGQAAQRADPPSGTTEGRLQSTQAIFRPNFDDDDDLLHISVPSVDTEPQDRITPATRVLPPIRQLGGGLVEIRRVRDIDPLEALMTNPVVPESKRFCWNCGRPVGRSELEGQEADGAQGAKEGWCPYCGSPYSFLPQLSPGDIVAGQYEVKGCIAHGGLGWVYLAFDHNVNDRPVVLKGLVHSGDAEAQASAVAERQFLAEVVHPQIVQIFNFVEHKDTSGDPVGYIVMEYIGGRSLKRGSKKGNVEKLPVAEAIAYLLEILPALSYLHSIGLVYNDLKPENIMLTEEQLKLIDLGAVSRINSFGCIYGTPGYQAPEIVRTGPTVATDIYTVGRTLAALTLNLRTRNGRYMDGLPEDDPVLTTYDSFARLLHRAINPDPRRRFSSAEEMSAQLMGVLREVVAQDTGVPRAGLSTIFSPSRSTFGVDLLVAHTDVYLDGRLHSEKLTAKDIVTALQVPLVDPTDVAAPVLQATVLSQPVQTLDSLRAARHGMLDAQGIDLAESVELPLMEVRALLDLGDVVKANRKLDDLADRVSCQWRLVWYRAVADLLTGDYASATKHFTEVLNTFPGELAPKLALAATAELAGESDEHKFYRTVWHTNDGVVSAAFGLARFQSAEGDRTGAVCTLDEVPPTSRHFTTARLTSAVTLLSGRSTNEITEQQIRDAARRVETLPPTEPRVLQIRALVLGCAMDWLADNQASANHILGFPFTKHGLRLGVEASLRSLARVAPTQRHRYTLVDMANKVRPTSTL.

Residues M1–Q32 are disordered. Residues Y160–M406 form the Protein kinase domain. ATP-binding positions include I166 to V174 and K190. D289 (proton acceptor) is an active-site residue.

Belongs to the protein kinase superfamily. Ser/Thr protein kinase family. In terms of processing, autophosphorylated.

The catalysed reaction is L-seryl-[protein] + ATP = O-phospho-L-seryl-[protein] + ADP + H(+). It carries out the reaction L-threonyl-[protein] + ATP = O-phospho-L-threonyl-[protein] + ADP + H(+). The protein is Serine/threonine-protein kinase PknG (pknG) of Mycobacterium leprae (strain TN).